The sequence spans 67 residues: Large ribosomal subunit protein bL35 (67 aa).

This sequence belongs to the bacterial ribosomal protein bL35 family.

The chain is Large ribosomal subunit protein bL35 from Zymomonas mobilis subsp. mobilis (strain ATCC 31821 / ZM4 / CP4).